The primary structure comprises 302 residues: 4-diphosphocytidyl-2-C-methyl-D-erythritol kinase (302 aa).

The active site involves K13. 101–111 (PVASGIGGGSS) provides a ligand contact to ATP. Residue D143 is part of the active site.

This sequence belongs to the GHMP kinase family. IspE subfamily.

The enzyme catalyses 4-CDP-2-C-methyl-D-erythritol + ATP = 4-CDP-2-C-methyl-D-erythritol 2-phosphate + ADP + H(+). It participates in isoprenoid biosynthesis; isopentenyl diphosphate biosynthesis via DXP pathway; isopentenyl diphosphate from 1-deoxy-D-xylulose 5-phosphate: step 3/6. Functionally, catalyzes the phosphorylation of the position 2 hydroxy group of 4-diphosphocytidyl-2C-methyl-D-erythritol. The sequence is that of 4-diphosphocytidyl-2-C-methyl-D-erythritol kinase from Granulibacter bethesdensis (strain ATCC BAA-1260 / CGDNIH1).